Consider the following 220-residue polypeptide: Probable nicotinate-nucleotide adenylyltransferase (220 aa).

Belongs to the NadD family.

It catalyses the reaction nicotinate beta-D-ribonucleotide + ATP + H(+) = deamido-NAD(+) + diphosphate. It participates in cofactor biosynthesis; NAD(+) biosynthesis; deamido-NAD(+) from nicotinate D-ribonucleotide: step 1/1. Catalyzes the reversible adenylation of nicotinate mononucleotide (NaMN) to nicotinic acid adenine dinucleotide (NaAD). The sequence is that of Probable nicotinate-nucleotide adenylyltransferase from Yersinia pseudotuberculosis serotype O:1b (strain IP 31758).